The chain runs to 110 residues: Large ribosomal subunit protein uL22 (110 aa).

This sequence belongs to the universal ribosomal protein uL22 family. Part of the 50S ribosomal subunit.

This protein binds specifically to 23S rRNA; its binding is stimulated by other ribosomal proteins, e.g. L4, L17, and L20. It is important during the early stages of 50S assembly. It makes multiple contacts with different domains of the 23S rRNA in the assembled 50S subunit and ribosome. In terms of biological role, the globular domain of the protein is located near the polypeptide exit tunnel on the outside of the subunit, while an extended beta-hairpin is found that lines the wall of the exit tunnel in the center of the 70S ribosome. This is Large ribosomal subunit protein uL22 from Variovorax paradoxus (strain S110).